Reading from the N-terminus, the 205-residue chain is uncharacterized protein (205 aa).

This is an uncharacterized protein from Caenorhabditis elegans.